The following is a 352-amino-acid chain: Selenide, water dikinase (352 aa).

Residue Cys-23 is part of the active site. Residues Lys-26 and 54–56 each bind ATP; that span reads SRD. Asp-57 is a binding site for Mg(2+). ATP is bound by residues Asp-74, Asp-97, and 145–147; that span reads GHS. Asp-97 serves as a coordination point for Mg(2+). Asp-233 contacts Mg(2+).

Belongs to the selenophosphate synthase 1 family. Class I subfamily. Homodimer. Requires Mg(2+) as cofactor.

It carries out the reaction hydrogenselenide + ATP + H2O = selenophosphate + AMP + phosphate + 2 H(+). Synthesizes selenophosphate from selenide and ATP. The chain is Selenide, water dikinase from Shewanella sp. (strain ANA-3).